Reading from the N-terminus, the 199-residue chain is Proteasome subunit beta type-2-B (199 aa).

Met-1 is subject to N-acetylmethionine.

This sequence belongs to the peptidase T1B family. As to quaternary structure, component of the 20S core complex of the 26S proteasome. The 26S proteasome is composed of a core protease (CP), known as the 20S proteasome, capped at one or both ends by the 19S regulatory particle (RP/PA700). The 20S proteasome core is composed of 28 subunits that are arranged in four stacked rings, resulting in a barrel-shaped structure. The two end rings are each formed by seven alpha subunits, and the two central rings are each formed by seven beta subunits. The catalytic chamber with the active sites is on the inside of the barrel. In terms of tissue distribution, ubiquitous low levels, higher expression in siliques and flowers.

Its subcellular location is the cytoplasm. The protein resides in the nucleus. Its function is as follows. Non-catalytic component of the proteasome, a multicatalytic proteinase complex which is characterized by its ability to cleave peptides with Arg, Phe, Tyr, Leu, and Glu adjacent to the leaving group at neutral or slightly basic pH. The proteasome has an ATP-dependent proteolytic activity. The polypeptide is Proteasome subunit beta type-2-B (PBD2) (Arabidopsis thaliana (Mouse-ear cress)).